We begin with the raw amino-acid sequence, 80 residues long: ATP synthase subunit c (80 aa).

The next 2 membrane-spanning stretches (helical) occupy residues 8–28 (MIYF…AIGI) and 55–75 (IVMG…LYLI).

Belongs to the ATPase C chain family. In terms of assembly, F-type ATPases have 2 components, F(1) - the catalytic core - and F(0) - the membrane proton channel. F(1) has five subunits: alpha(3), beta(3), gamma(1), delta(1), epsilon(1). F(0) has three main subunits: a(1), b(2) and c(10-14). The alpha and beta chains form an alternating ring which encloses part of the gamma chain. F(1) is attached to F(0) by a central stalk formed by the gamma and epsilon chains, while a peripheral stalk is formed by the delta and b chains.

The protein resides in the cell inner membrane. F(1)F(0) ATP synthase produces ATP from ADP in the presence of a proton or sodium gradient. F-type ATPases consist of two structural domains, F(1) containing the extramembraneous catalytic core and F(0) containing the membrane proton channel, linked together by a central stalk and a peripheral stalk. During catalysis, ATP synthesis in the catalytic domain of F(1) is coupled via a rotary mechanism of the central stalk subunits to proton translocation. In terms of biological role, key component of the F(0) channel; it plays a direct role in translocation across the membrane. A homomeric c-ring of between 10-14 subunits forms the central stalk rotor element with the F(1) delta and epsilon subunits. The sequence is that of ATP synthase subunit c from Aeromonas salmonicida (strain A449).